The sequence spans 484 residues: Cobyric acid synthase (484 aa).

A GATase cobBQ-type domain is found at 251-438; the sequence is ALKIAVPVLP…LHGLFCSDAY (188 aa). Cys-333 acts as the Nucleophile in catalysis. The active site involves His-430.

The protein belongs to the CobB/CobQ family. CobQ subfamily.

Its pathway is cofactor biosynthesis; adenosylcobalamin biosynthesis. In terms of biological role, catalyzes amidations at positions B, D, E, and G on adenosylcobyrinic A,C-diamide. NH(2) groups are provided by glutamine, and one molecule of ATP is hydrogenolyzed for each amidation. This Rhizobium rhizogenes (strain K84 / ATCC BAA-868) (Agrobacterium radiobacter) protein is Cobyric acid synthase.